The primary structure comprises 212 residues: Adenylate kinase (212 aa).

ATP is bound at residue 14 to 19 (GSGKGT). The NMP stretch occupies residues 34-63 (STGDLFRKKISEDSRFAAQIQNYLSSGSYV). Residues Thr-35, Arg-40, 61–63 (SYV), 89–92 (GYPR), and Gln-96 each bind AMP. Positions 126–163 (QRLFCQKCQKSYNLLLAKPKNGLKCDLDNTDLITRNDD) are LID. Residue Arg-127 coordinates ATP. 2 residues coordinate Zn(2+): Cys-130 and Cys-133. An ATP-binding site is contributed by 136–137 (SY). Residues Cys-150 and Asp-153 each contribute to the Zn(2+) site. AMP contacts are provided by Arg-160 and Arg-171. Gln-199 is a binding site for ATP.

The protein belongs to the adenylate kinase family. In terms of assembly, monomer.

It is found in the cytoplasm. It carries out the reaction AMP + ATP = 2 ADP. Its pathway is purine metabolism; AMP biosynthesis via salvage pathway; AMP from ADP: step 1/1. Functionally, catalyzes the reversible transfer of the terminal phosphate group between ATP and AMP. Plays an important role in cellular energy homeostasis and in adenine nucleotide metabolism. The polypeptide is Adenylate kinase (Mesomycoplasma hyopneumoniae (strain 232) (Mycoplasma hyopneumoniae)).